The chain runs to 201 residues: Dephospho-CoA kinase (201 aa).

A DPCK domain is found at 4–201 (SVGLTGNIAS…KYLREAKIKQ (198 aa)). An ATP-binding site is contributed by 12 to 17 (ASGKST).

This sequence belongs to the CoaE family.

The protein localises to the cytoplasm. The enzyme catalyses 3'-dephospho-CoA + ATP = ADP + CoA + H(+). It functions in the pathway cofactor biosynthesis; coenzyme A biosynthesis; CoA from (R)-pantothenate: step 5/5. In terms of biological role, catalyzes the phosphorylation of the 3'-hydroxyl group of dephosphocoenzyme A to form coenzyme A. This is Dephospho-CoA kinase from Legionella pneumophila (strain Paris).